Here is a 512-residue protein sequence, read N- to C-terminus: Rab11 family-interacting protein 2 (512 aa).

Residues 1-120 enclose the C2 domain; that stretch reads MMLSEQAQKW…DKQRRKTEWF (120 aa). A necessary for its cellular translocation to the plasma membrane region spans residues 15–102; that stretch reads VQVTVLQAKD…GLDKFLGQVA (88 aa). Disordered stretches follow at residues 169-239 and 262-285; these read DKMK…MSSE and VPES…KMNQ. Residues 178 to 188 show a composition bias toward polar residues; sequence GTFSDTSSAII. Positions 226-236 are enriched in low complexity; that stretch reads HSMSDLSGSHM. Ser-227 bears the Phosphoserine; by MARK2 mark. Residue Ser-277 is modified to Phosphoserine. Positions 323–325 match the NPF 1 motif; that stretch reads NPF. The span at 361–374 shows a compositional bias: basic and acidic residues; it reads ERVTGKKDSRRSDK. Positions 361–392 are disordered; it reads ERVTGKKDSRRSDKLNNGGSDSPCDLKSPNAF. 2 short sequence motifs (NPF) span residues 406-408 and 440-442; these read NPF. The FIP-RBD domain maps to 437-499; that stretch reads PDSNPFDATA…EETPSILRVP (63 aa). The necessary for interaction with AP2A1, RAB11A, subcellular location, endocytosis activity and homooligomerization stretch occupies residues 465 to 512; the sequence is ELLRRKDTHIRELEDYIDNLLVRVMEETPSILRVPYEPSRKAGKFSNS.

As to quaternary structure, homooligomerizes in a Rab11-independent manner. Forms a heterooligomeric complex with RAB11FIP4. Interacts with AP2A1, MYO5B, RAB25 and REPS1. Interacts with RAB11A and RAB11B (activated GTP-bound form). Interacts with NPC1L1. Interacts (via NPF motifs) with EHD1 and EHD3. Interacts with TICAM2; this interaction directs RAB11FIP2 to the phagosome. Interacts with RAB14 and RAB25 (GTP-bound forms). Post-translationally, phosphorylation at Ser-227 by MARK2 regulates epithelial cell polarity.

The protein resides in the cell projection. It is found in the phagocytic cup. Its subcellular location is the cell membrane. The protein localises to the recycling endosome membrane. Functionally, a Rab11 effector binding preferentially phosphatidylinositol 3,4,5-trisphosphate (PtdInsP3) and phosphatidic acid (PA) and acting in the regulation of the transport of vesicles from the endosomal recycling compartment (ERC) to the plasma membrane. Involved in insulin granule exocytosis. Also involved in receptor-mediated endocytosis and membrane trafficking of recycling endosomes, probably originating from clathrin-coated vesicles. Required in a complex with MYO5B and RAB11 for the transport of NPC1L1 to the plasma membrane. Also acts as a regulator of cell polarity. Plays an essential role in phagocytosis through a mechanism involving TICAM2, RAC1 and CDC42 Rho GTPases for controlling actin-dynamics. The sequence is that of Rab11 family-interacting protein 2 (RAB11FIP2) from Homo sapiens (Human).